Here is a 261-residue protein sequence, read N- to C-terminus: Ribosomal RNA small subunit methyltransferase J (261 aa).

S-adenosyl-L-methionine is bound by residues 129–130 (ER) and Asp182.

This sequence belongs to the methyltransferase superfamily. RsmJ family.

The protein resides in the cytoplasm. The enzyme catalyses guanosine(1516) in 16S rRNA + S-adenosyl-L-methionine = N(2)-methylguanosine(1516) in 16S rRNA + S-adenosyl-L-homocysteine + H(+). Functionally, specifically methylates the guanosine in position 1516 of 16S rRNA. The protein is Ribosomal RNA small subunit methyltransferase J of Desulfotalea psychrophila (strain LSv54 / DSM 12343).